The chain runs to 69 residues: ATP synthase F(0) complex subunit e, mitochondrial (69 aa).

An N6-acetyllysine modification is found at lysine 34. A Phosphoserine modification is found at serine 66.

It belongs to the ATPase e subunit family. As to quaternary structure, component of the ATP synthase complex composed at least of ATP5F1A/subunit alpha, ATP5F1B/subunit beta, ATP5MC1/subunit c (homooctomer), MT-ATP6/subunit a, MT-ATP8/subunit 8, ATP5ME/subunit e, ATP5MF/subunit f, ATP5MG/subunit g, ATP5MK/subunit k, ATP5MJ/subunit j, ATP5F1C/subunit gamma, ATP5F1D/subunit delta, ATP5F1E/subunit epsilon, ATP5PF/subunit F6, ATP5PB/subunit b, ATP5PD/subunit d, ATP5PO/subunit OSCP. ATP synthase complex consists of a soluble F(1) head domain (subunits alpha(3) and beta(3)) - the catalytic core - and a membrane F(0) domain - the membrane proton channel (subunits c, a, 8, e, f, g, k and j). These two domains are linked by a central stalk (subunits gamma, delta, and epsilon) rotating inside the F1 region and a stationary peripheral stalk (subunits F6, b, d, and OSCP).

Its subcellular location is the mitochondrion. It localises to the mitochondrion inner membrane. In terms of biological role, subunit e, of the mitochondrial membrane ATP synthase complex (F(1)F(0) ATP synthase or Complex V) that produces ATP from ADP in the presence of a proton gradient across the membrane which is generated by electron transport complexes of the respiratory chain. ATP synthase complex consist of a soluble F(1) head domain - the catalytic core - and a membrane F(1) domain - the membrane proton channel. These two domains are linked by a central stalk rotating inside the F(1) region and a stationary peripheral stalk. During catalysis, ATP synthesis in the catalytic domain of F(1) is coupled via a rotary mechanism of the central stalk subunits to proton translocation. In vivo, can only synthesize ATP although its ATP hydrolase activity can be activated artificially in vitro. Part of the complex F(0) domain. The protein is ATP synthase F(0) complex subunit e, mitochondrial of Homo sapiens (Human).